The chain runs to 184 residues: Photosystem I assembly protein Ycf4 (184 aa).

Transmembrane regions (helical) follow at residues 22-42 (FCWA…GISS) and 64-84 (IVMS…WSTI).

The protein belongs to the Ycf4 family.

The protein resides in the plastid. Its subcellular location is the chloroplast thylakoid membrane. Its function is as follows. Seems to be required for the assembly of the photosystem I complex. The polypeptide is Photosystem I assembly protein Ycf4 (Piper cenocladum (Ant piper)).